A 2800-amino-acid polypeptide reads, in one-letter code: Probable serine/threonine-protein kinase roco5 (2800 aa).

The span at 1–61 shows a compositional bias: basic and acidic residues; sequence MEVIKKEKKD…EKEKDKEKDG (61 aa). 3 disordered regions span residues 1–92, 123–225, and 417–437; these read MEVI…SAQS, TTTT…SPVD, and GINSANSNNNNNNSGGGSSGI. Over residues 77 to 86 the composition is skewed to pro residues; that stretch reads PTPPPPPPPS. Composition is skewed to low complexity over residues 123 to 134 and 143 to 170; these read TTTTTTTTSSNN and NNNTSNNNINNNNKTSNTTGSNVSSSNN. Over residues 176-190 the composition is skewed to polar residues; the sequence is INVTSLDSGGNNNAS. Residues 194–218 show a composition bias toward basic and acidic residues; sequence ISNEHSPKNRKEKEKEKDKDNKEDS. In terms of domain architecture, DH spans 227 to 508; the sequence is NRRKLVEGFM…VQVVKDIVNE (282 aa). A compositionally biased stretch (low complexity) spans 417–429; the sequence is GINSANSNNNNNN. A PH domain is found at 540–649; that stretch reads KFLKEGILIE…WFQVLSQASL (110 aa). LRR repeat units follow at residues 777–800, 805–832, 834–856, and 861–885; these read NKSITHLTLSQNSINDPCAVALGD, NHSLIQMDLSENTIADKGLISLIDGILS, PSITVVILTQNQITDTGAKHISK, and NQTLNALFLEDNNITQSMGAEIIDQ. A disordered region spans residues 926 to 946; the sequence is KQLQVNQKSTTPSTSTSTTSS. Over residues 934-946 the composition is skewed to low complexity; sequence STTPSTSTSTTSS. 10 LRR repeats span residues 971-984, 985-1007, 1008-1031, 1033-1056, 1058-1077, 1078-1101, 1128-1151, 1152-1174, 1175-1197, and 1199-1222; these read LNKLNMLSLDSRRI, SDLKELYLDHNCISSIPVSILKE, LKNLQILDLSNNQLSSLPSEISEM, ELKLLNVSHNNLSSLPIELGTLCK, NHLDISFNFIETINVNSLSQ, LVNLKVLMMQRNYFNRLPIEIFTR, AIKATKLDLSDCGLSALPIEIGSI, SSLIELDLTNNRIKDLPPQIGKL, SSLQTLNLSNNAIESLPWQLSQL, and TLKVLNITGNPISFDGASNAKISI. A Roc domain is found at 1244-1464; sequence KEKPCMRMKL…NHIVKLGKAE (221 aa). GTP is bound by residues 1257–1264, 1348–1352, and 1407–1410; these read GQENVGKT, DFAGQ, and THLD. In terms of domain architecture, COR 1 spans 1473–1604; that stretch reads RSYFQLENLI…KFEIVHPLPD (132 aa). Disordered regions lie at residues 1605–1665 and 1688–1711; these read PKAT…SLLN and DQSTSPSNSTTPSPNTSSNNFSDS. Low complexity-rich tracts occupy residues 1610-1645, 1653-1665, and 1688-1707; these read SSSSSSPSTTQKSLNNSGSNLKSSGSAISTSSSSTT, RTNSTTNTTSLLN, and DQSTSPSNSTTPSPNTSSNN. The COR 2 domain occupies 1717–1790; it reads KSSTKHLVPI…VKEFWKNGLL (74 aa). Low complexity predominate over residues 1886 to 2008; the sequence is SQQQHHQQQQ…LNPDSTSSSN (123 aa). 2 disordered regions span residues 1886–2011 and 2050–2070; these read SQQQ…NETS and RNTNKPKINGTTGSGSSSSIV. Positions 2050 to 2059 are enriched in polar residues; the sequence is RNTNKPKING. The region spanning 2175-2440 is the Protein kinase domain; it reads LEIIEKVGEG…PTFIDIHSRL (266 aa). Residues 2181 to 2189 and Lys2202 each bind ATP; that span reads VGEGGFGIV. The Proton acceptor role is filled by Asp2300. 4 stretches are compositionally biased toward low complexity: residues 2452–2490, 2583–2654, 2669–2685, and 2694–2704; these read TTTNSAKSTISTGFNSNSGATTTTKPKSSTISSGSGTTS, LKTP…SPIS, TTQTTSTPPTNQTPNPT, and SSLSSNSINKP. Disordered stretches follow at residues 2452 to 2498 and 2544 to 2800; these read TTTN…HPQL and AGGN…AIPK. The segment covering 2705–2723 has biased composition (pro residues); that stretch reads PSKPLPTPGGVTSPPPPPT. Polar residues predominate over residues 2730-2756; sequence IKFNSISAGNKTIGQSSTLPSSTLKQF. Residues 2757–2787 show a composition bias toward low complexity; that stretch reads TANNNTSPSGSSSLPNSTVSSPSSSFLLRPT.

This sequence belongs to the protein kinase superfamily. TKL Ser/Thr protein kinase family. ROCO subfamily.

It carries out the reaction L-seryl-[protein] + ATP = O-phospho-L-seryl-[protein] + ADP + H(+). The catalysed reaction is L-threonyl-[protein] + ATP = O-phospho-L-threonyl-[protein] + ADP + H(+). In terms of biological role, may act as a serine/threonine-protein kinase and guanine-nucleotide releasing factor. The polypeptide is Probable serine/threonine-protein kinase roco5 (roco5) (Dictyostelium discoideum (Social amoeba)).